Consider the following 339-residue polypeptide: Large ribosomal subunit protein uL10 (339 aa).

Residues threonine 305–glycine 339 are disordered. A compositionally biased stretch (acidic residues) spans lysine 312–alanine 330.

Belongs to the universal ribosomal protein uL10 family. As to quaternary structure, part of the 50S ribosomal subunit. Forms part of the ribosomal stalk which helps the ribosome interact with GTP-bound translation factors. Forms a heptameric L10(L12)2(L12)2(L12)2 complex, where L10 forms an elongated spine to which the L12 dimers bind in a sequential fashion.

Its function is as follows. Forms part of the ribosomal stalk, playing a central role in the interaction of the ribosome with GTP-bound translation factors. The polypeptide is Large ribosomal subunit protein uL10 (Thermococcus onnurineus (strain NA1)).